We begin with the raw amino-acid sequence, 271 residues long: Aspartate/glutamate leucyltransferase (271 aa).

Belongs to the R-transferase family. Bpt subfamily.

It localises to the cytoplasm. The enzyme catalyses N-terminal L-glutamyl-[protein] + L-leucyl-tRNA(Leu) = N-terminal L-leucyl-L-glutamyl-[protein] + tRNA(Leu) + H(+). The catalysed reaction is N-terminal L-aspartyl-[protein] + L-leucyl-tRNA(Leu) = N-terminal L-leucyl-L-aspartyl-[protein] + tRNA(Leu) + H(+). Its function is as follows. Functions in the N-end rule pathway of protein degradation where it conjugates Leu from its aminoacyl-tRNA to the N-termini of proteins containing an N-terminal aspartate or glutamate. This chain is Aspartate/glutamate leucyltransferase, found in Acinetobacter baumannii (strain SDF).